A 1353-amino-acid chain; its full sequence is Ankyrin repeat domain-containing protein 36B (1353 aa).

6 ANK repeats span residues 19 to 48, 52 to 81, 85 to 114, 118 to 147, 151 to 180, and 184 to 213; these read YHLKRIHRAVLRGNLEKLKYLLLTYYDANK, KERTALHLACATGQPEMVHLLVSRRCELNL, EDRTPLIKAVQLRQEACATLLLQNGADPNI, FGRTALHYAVYNEDTSMIEKLLSHGTNIEE, NEYQPLLLAVSRRKVKMVEFLLKKKANVNA, and LGRSALILAVTLGEKDIVILLLQHNIDVFS. Disordered stretches follow at residues 249–307 and 349–607; these read PINS…KDSV and MGGG…KATS. Residues 250–259 are compositionally biased toward polar residues; the sequence is INSNPVSPQK. Basic and acidic residues-rich tracts occupy residues 260–272 and 295–306; these read QRAEKATSDDKDS and PAEKATSDEKDS. Composition is skewed to polar residues over residues 355–367 and 389–400; these read GTVSSQKQPASKT and GTVSSQKQQALK. Basic and acidic residues-rich tracts occupy residues 436 to 455 and 471 to 491; these read TSDEKDSFSNITREKKDGEI and SVKEDSVLNIAREKKDGEKSR. Residues 579–600 show a composition bias toward polar residues; it reads VSNIPTEIKDGQQSGTVSSQKQ. 4 coiled-coil regions span residues 731 to 762, 821 to 908, 937 to 1055, and 1119 to 1344; these read AEQDLEMASEGEQKRLEEYENNQPQVKNQIHS, IKLK…YRIE, SETD…DHDQ, and VFEH…LQHS.

It belongs to the ANKRD36 family.

The chain is Ankyrin repeat domain-containing protein 36B (ANKRD36B) from Homo sapiens (Human).